The sequence spans 509 residues: UDP-N-acetylmuramoyl-L-alanyl-D-glutamate--2,6-diaminopimelate ligase (509 aa).

Ser32 is a UDP-N-acetyl-alpha-D-muramoyl-L-alanyl-D-glutamate binding site. 117 to 123 (GTNGKTT) is a binding site for ATP. Residues 159–160 (TT), Ser186, Gln192, and Arg194 each bind UDP-N-acetyl-alpha-D-muramoyl-L-alanyl-D-glutamate. Lys226 carries the N6-carboxylysine modification. Meso-2,6-diaminopimelate is bound by residues Arg401, 425-428 (DNPR), Gly476, and Glu480. The Meso-diaminopimelate recognition motif motif lies at 425–428 (DNPR).

It belongs to the MurCDEF family. MurE subfamily. Mg(2+) is required as a cofactor. Carboxylation is probably crucial for Mg(2+) binding and, consequently, for the gamma-phosphate positioning of ATP.

It is found in the cytoplasm. It carries out the reaction UDP-N-acetyl-alpha-D-muramoyl-L-alanyl-D-glutamate + meso-2,6-diaminopimelate + ATP = UDP-N-acetyl-alpha-D-muramoyl-L-alanyl-gamma-D-glutamyl-meso-2,6-diaminopimelate + ADP + phosphate + H(+). Its pathway is cell wall biogenesis; peptidoglycan biosynthesis. Its function is as follows. Catalyzes the addition of meso-diaminopimelic acid to the nucleotide precursor UDP-N-acetylmuramoyl-L-alanyl-D-glutamate (UMAG) in the biosynthesis of bacterial cell-wall peptidoglycan. This chain is UDP-N-acetylmuramoyl-L-alanyl-D-glutamate--2,6-diaminopimelate ligase, found in Prochlorococcus marinus (strain NATL1A).